The primary structure comprises 486 residues: Surface lipoprotein assembly modifier (486 aa).

A signal peptide spans 1-29 (MKNGVKQISFLSLIGLSLIGLSLTNIAWA). Residues 30–197 (KVARPKNDTL…QYLLTLNQRN (168 aa)) are N-terminal domain. The interval 198-486 (QWIWQVGLNF…RIYLEIGKIF (289 aa)) is C-terminal probable beta barrel. 14 beta stranded membrane passes run 199–209 (WIWQVGLNFLN), 237–248 (GRVFFISRKKWP), 253–262 (FFSKTMFNGN), 276–286 (TLRIGGGLGYQ), 290–300 (VEVSLFPFQEK), 320–330 (LGIRLENVDWL), 334–344 (WQISTALEYGE), 358–367 (YFISSTLFYL), 373–382 (FWFVGMDFHR), 395–404 (KTLRLGWGQD), 409–419 (ISSRLTFSYAN), 437–446 (YATTITLWHR), 453–463 (LTPKLSWDYQK), and 476–486 (NRIYLEIGKIF).

Belongs to the Slam family.

Its subcellular location is the cell outer membrane. Functionally, required for correct export to the cell surface of some cell outer membrane lipoproteins (tested with TpbP) upon heterologous expression in E.coli and probably also in Haemophilus. This chain is Surface lipoprotein assembly modifier, found in Haemophilus influenzae (strain 86-028NP).